We begin with the raw amino-acid sequence, 160 residues long: Ribosomal RNA large subunit methyltransferase H (160 aa).

2 residues coordinate S-adenosyl-L-methionine: Leu-76 and Gly-108.

This sequence belongs to the RNA methyltransferase RlmH family. In terms of assembly, homodimer.

The protein resides in the cytoplasm. It catalyses the reaction pseudouridine(1915) in 23S rRNA + S-adenosyl-L-methionine = N(3)-methylpseudouridine(1915) in 23S rRNA + S-adenosyl-L-homocysteine + H(+). In terms of biological role, specifically methylates the pseudouridine at position 1915 (m3Psi1915) in 23S rRNA. The sequence is that of Ribosomal RNA large subunit methyltransferase H from Xanthobacter autotrophicus (strain ATCC BAA-1158 / Py2).